The sequence spans 162 residues: MEDETLGFFKKTSSSHARLNVPALVQVAALAIIMIRGLDVLMIFNTLGVRGIGEFIHRSVQTWSLTLVFLSSLVLVFIEIWCAFSLVKGRRWARWLYLLTQITAASYLWAASLGYGYPELFSIPGESKREIFHSLMLQKLPDMLILMLLFVPSTSRRFFQLQ.

The Periplasmic segment spans residues 1–23; that stretch reads MEDETLGFFKKTSSSHARLNVPA. The chain crosses the membrane as a helical span at residues 24 to 44; sequence LVQVAALAIIMIRGLDVLMIF. The Cytoplasmic segment spans residues 45-66; that stretch reads NTLGVRGIGEFIHRSVQTWSLT. Residues 67–87 form a helical membrane-spanning segment; sequence LVFLSSLVLVFIEIWCAFSLV. The Periplasmic portion of the chain corresponds to 88-94; sequence KGRRWAR. A helical membrane pass occupies residues 95 to 115; that stretch reads WLYLLTQITAASYLWAASLGY. Over 116–162 the chain is Cytoplasmic; it reads GYPELFSIPGESKREIFHSLMLQKLPDMLILMLLFVPSTSRRFFQLQ.

It localises to the cell inner membrane. This is Inner membrane protein YbjO (ybjO) from Escherichia coli O157:H7.